Reading from the N-terminus, the 103-residue chain is Protein reprimo A (103 aa).

A helical transmembrane segment spans residues 50–70 (IVQIAVMCVLSLTVVFGIFFL).

Belongs to the reprimo family.

It is found in the cytoplasm. Its subcellular location is the membrane. May be involved in the regulation of p53-dependent G2 arrest of the cell cycle. This is Protein reprimo A from Danio rerio (Zebrafish).